The following is a 374-amino-acid chain: Queuine tRNA-ribosyltransferase (374 aa).

The active-site Proton acceptor is Asp-89. Substrate contacts are provided by residues 89–93, Asp-143, Gln-187, and Gly-214; that span reads DSGGF. The interval 245–251 is RNA binding; sequence GVGKPED. Asp-264 functions as the Nucleophile in the catalytic mechanism. The tract at residues 269–273 is RNA binding; important for wobble base 34 recognition; that stretch reads TRNAR. 4 residues coordinate Zn(2+): Cys-302, Cys-304, Cys-307, and His-333.

It belongs to the queuine tRNA-ribosyltransferase family. Homodimer. Within each dimer, one monomer is responsible for RNA recognition and catalysis, while the other monomer binds to the replacement base PreQ1. It depends on Zn(2+) as a cofactor.

The catalysed reaction is 7-aminomethyl-7-carbaguanine + guanosine(34) in tRNA = 7-aminomethyl-7-carbaguanosine(34) in tRNA + guanine. It participates in tRNA modification; tRNA-queuosine biosynthesis. Catalyzes the base-exchange of a guanine (G) residue with the queuine precursor 7-aminomethyl-7-deazaguanine (PreQ1) at position 34 (anticodon wobble position) in tRNAs with GU(N) anticodons (tRNA-Asp, -Asn, -His and -Tyr). Catalysis occurs through a double-displacement mechanism. The nucleophile active site attacks the C1' of nucleotide 34 to detach the guanine base from the RNA, forming a covalent enzyme-RNA intermediate. The proton acceptor active site deprotonates the incoming PreQ1, allowing a nucleophilic attack on the C1' of the ribose to form the product. After dissociation, two additional enzymatic reactions on the tRNA convert PreQ1 to queuine (Q), resulting in the hypermodified nucleoside queuosine (7-(((4,5-cis-dihydroxy-2-cyclopenten-1-yl)amino)methyl)-7-deazaguanosine). The protein is Queuine tRNA-ribosyltransferase of Shewanella sp. (strain MR-4).